A 246-amino-acid chain; its full sequence is 3-deoxy-manno-octulosonate cytidylyltransferase (246 aa).

This sequence belongs to the KdsB family.

It is found in the cytoplasm. The enzyme catalyses 3-deoxy-alpha-D-manno-oct-2-ulosonate + CTP = CMP-3-deoxy-beta-D-manno-octulosonate + diphosphate. It functions in the pathway nucleotide-sugar biosynthesis; CMP-3-deoxy-D-manno-octulosonate biosynthesis; CMP-3-deoxy-D-manno-octulosonate from 3-deoxy-D-manno-octulosonate and CTP: step 1/1. The protein operates within bacterial outer membrane biogenesis; lipopolysaccharide biosynthesis. Activates KDO (a required 8-carbon sugar) for incorporation into bacterial lipopolysaccharide in Gram-negative bacteria. In Rickettsia peacockii (strain Rustic), this protein is 3-deoxy-manno-octulosonate cytidylyltransferase.